The chain runs to 256 residues: CRAL-TRIO domain-containing protein DDB_G0278031 (256 aa).

In terms of domain architecture, CRAL-TRIO spans 82–245 (NPELAMKSSS…EYGGTLNLTY (164 aa)).

The sequence is that of CRAL-TRIO domain-containing protein DDB_G0278031 from Dictyostelium discoideum (Social amoeba).